Here is a 208-residue protein sequence, read N- to C-terminus: Interleukin-6 (208 aa).

Positions 1–29 (MNSRFTSAFTPFAVSLGLLLVMTSAFPTP) are cleaved as a signal peptide. Asn38 is a glycosylation site (N-linked (GlcNAc...) asparagine). Cys72 and Cys78 are joined by a disulfide. Ser81 is subject to Phosphoserine. Cys101 and Cys111 are oxidised to a cystine.

This sequence belongs to the IL-6 superfamily. Component of a hexamer of two molecules each of IL6, IL6R and IL6ST; first binds to IL6R to associate with the signaling subunit IL6ST. Interacts with IL6R (via the N-terminal ectodomain); this interaction may be affected by IL6R-binding with SORL1, hence decreasing IL6 cis signaling. Interacts with SORL1 (via the N-terminal ectodomain); this interaction leads to IL6 internalization and lysosomal degradation. May form a trimeric complex with the soluble SORL1 ectodomain and soluble IL6R receptor; this interaction might stabilize circulating IL6, hence promoting IL6 trans signaling.

It is found in the secreted. In terms of biological role, cytokine with a wide variety of biological functions in immunity, tissue regeneration, and metabolism. Binds to IL6R, then the complex associates to the signaling subunit IL6ST/gp130 to trigger the intracellular IL6-signaling pathway. The interaction with the membrane-bound IL6R and IL6ST stimulates 'classic signaling', whereas the binding of IL6 and soluble IL6R to IL6ST stimulates 'trans-signaling'. Alternatively, 'cluster signaling' occurs when membrane-bound IL6:IL6R complexes on transmitter cells activate IL6ST receptors on neighboring receiver cells. Functionally, IL6 is a potent inducer of the acute phase response. Rapid production of IL6 contributes to host defense during infection and tissue injury, but excessive IL6 synthesis is involved in disease pathology. In the innate immune response, is synthesized by myeloid cells, such as macrophages and dendritic cells, upon recognition of pathogens through toll-like receptors (TLRs) at the site of infection or tissue injury. In the adaptive immune response, is required for the differentiation of B cells into immunoglobulin-secreting cells. Plays a major role in the differentiation of CD4(+) T cell subsets. Essential factor for the development of T follicular helper (Tfh) cells that are required for the induction of germinal-center formation. Required to drive naive CD4(+) T cells to the Th17 lineage. Also required for proliferation of myeloma cells and the survival of plasmablast cells. Its function is as follows. Acts as an essential factor in bone homeostasis and on vessels directly or indirectly by induction of VEGF, resulting in increased angiogenesis activity and vascular permeability. Induces, through 'trans-signaling' and synergistically with IL1B and TNF, the production of VEGF. Involved in metabolic controls, is discharged into the bloodstream after muscle contraction increasing lipolysis and improving insulin resistance. 'Trans-signaling' in central nervous system also regulates energy and glucose homeostasis. Mediates, through GLP-1, crosstalk between insulin-sensitive tissues, intestinal L cells and pancreatic islets to adapt to changes in insulin demand. Also acts as a myokine. Plays a protective role during liver injury, being required for maintenance of tissue regeneration. Also has a pivotal role in iron metabolism by regulating HAMP/hepcidin expression upon inflammation or bacterial infection. Through activation of IL6ST-YAP-NOTCH pathway, induces inflammation-induced epithelial regeneration. This chain is Interleukin-6 (IL6), found in Bubalus bubalis (Domestic water buffalo).